Reading from the N-terminus, the 101-residue chain is Small ribosomal subunit protein bS18c (101 aa).

Belongs to the bacterial ribosomal protein bS18 family. As to quaternary structure, part of the 30S ribosomal subunit.

The protein resides in the plastid. The protein localises to the chloroplast. The protein is Small ribosomal subunit protein bS18c of Vitis vinifera (Grape).